A 206-amino-acid polypeptide reads, in one-letter code: Protein FAM228A (206 aa).

Belongs to the FAM228 family.

The protein is Protein FAM228A (FAM228A) of Homo sapiens (Human).